Here is a 328-residue protein sequence, read N- to C-terminus: Malate dehydrogenase (328 aa).

Gly-11 to Gly-17 is an NAD(+) binding site. Positions 94 and 100 each coordinate substrate. NAD(+) is bound by residues Asn-107, Gln-114, and Val-131–Asn-133. Substrate is bound by residues Asn-133 and Arg-164. Residue His-189 is the Proton acceptor of the active site.

It belongs to the LDH/MDH superfamily. MDH type 2 family.

It carries out the reaction (S)-malate + NAD(+) = oxaloacetate + NADH + H(+). In terms of biological role, catalyzes the reversible oxidation of malate to oxaloacetate. This chain is Malate dehydrogenase, found in Xylella fastidiosa (strain 9a5c).